A 69-amino-acid chain; its full sequence is VLIIAVLFLTACQLTTAETYSRGRQKHRARRSTDKNSKWTRECTRSGGACNSHTQCCDDFCSTATSTCI.

Positions 1–17 are cleaved as a signal peptide; it reads VLIIAVLFLTACQLTTA. Residues 18 to 41 constitute a propeptide that is removed on maturation; sequence ETYSRGRQKHRARRSTDKNSKWTR. 3 disulfides stabilise this stretch: Cys-43-Cys-57, Cys-50-Cys-61, and Cys-56-Cys-68.

Belongs to the conotoxin O1 superfamily. Expressed by the venom duct.

The protein localises to the secreted. In Conus ebraeus (Hebrew cone), this protein is Conotoxin Eb6.9 (E1).